We begin with the raw amino-acid sequence, 241 residues long: LexA repressor (241 aa).

Residues 26 to 46 (FDEMKTALDLRSKSGIHRLIT) constitute a DNA-binding region (H-T-H motif). Catalysis depends on for autocatalytic cleavage activity residues S162 and K200.

It belongs to the peptidase S24 family. Homodimer.

The catalysed reaction is Hydrolysis of Ala-|-Gly bond in repressor LexA.. Represses a number of genes involved in the response to DNA damage (SOS response), including recA and lexA. In the presence of single-stranded DNA, RecA interacts with LexA causing an autocatalytic cleavage which disrupts the DNA-binding part of LexA, leading to derepression of the SOS regulon and eventually DNA repair. This chain is LexA repressor, found in Ruegeria sp. (strain TM1040) (Silicibacter sp.).